A 672-amino-acid chain; its full sequence is F(420)H(2) dehydrogenase subunit L (672 aa).

Transmembrane regions (helical) follow at residues 8-28 (EFAFLIPLLPALAFAITFFFG), 37-57 (IVPILAIAASFVISFAITLGL), 79-99 (ILIDPLAAVMLSMVSFVSLLI), 136-156 (ILQLFVSWELVGLCSYLLIGF), 179-199 (VMFLTGIIVLTSDLLKVSGGF), 225-245 (ILGFEISHLTIITLLFFGGAV), 265-285 (TTVSALIHAATMVTAGVYLVA), 298-318 (LMVVAYFGGFTALFAGTMGIV), 337-357 (MMLGLGLGTAIGLEAVGISLF), 360-380 (INHAFFKALLFLCAGSVIHAV), 394-414 (VMPITAATMTIAALALAGFGI), 447-467 (YVFSILAALLTSIYIFRLIFM), 483-503 (PAIMTIPLSILAIFALAFGAL), 545-565 (LAVLWPPVIVALAGFAIAFVI), 601-621 (FSIGIVYGIIAFLTQVVDVII), and 652-672 (TALIAGVSLLIILVKLIMEVL).

Belongs to the complex I subunit 5 family. In terms of assembly, the FPO complex is composed of at least 13 different subunits. FpoA, FpoH, FpoJ, FpoK, FpoL, FpoM and FpoN proteins constitute the membrane sector of the complex.

The protein resides in the cell membrane. It carries out the reaction methanophenazine + reduced coenzyme F420-(gamma-L-Glu)(n) = dihydromethanophenazine + oxidized coenzyme F420-(gamma-L-Glu)(n) + H(+). Its function is as follows. Component of the F(420)H(2) dehydrogenase (FPO complex) which is part of the energy-conserving F(420)H(2):heterodisulfide oxidoreductase system. The membrane-bound electron transfer system of the complex plays an important role in the metabolism of methylotrophic methanogens when the organisms grow on methanol or methylamines. Catalyzes the oxidation of methanophenazine to dihydromethanophenazine. It shuttles electrons from F(420)H(2), via FAD and iron-sulfur (Fe-S) centers, to methanophenazine (an electron carrier in the membrane). It couples the redox reaction to proton translocation (for every two electrons transferred, two hydrogen ions are translocated across the cytoplasmic membrane), and thus conserves the redox energy in a proton gradient. It also catalyzes the oxidation of F(420)H(2) with quinones such as 2,3-dimethyl-1,4-naphthoquinone, 2-methyl-1,4-naphthoquinone and tetramethyl-p-benzoquinone. This is F(420)H(2) dehydrogenase subunit L (fpoL) from Methanosarcina mazei (strain ATCC BAA-159 / DSM 3647 / Goe1 / Go1 / JCM 11833 / OCM 88) (Methanosarcina frisia).